The sequence spans 413 residues: Probable glucan 1,3-beta-glucosidase ARB_04467 (413 aa).

An N-terminal signal peptide occupies residues 1 to 17; sequence MKFGSLLGLSLVGLSVA. 3 residues coordinate substrate: glutamate 46, glutamate 202, and tyrosine 262. Glutamate 202 (proton donor) is an active-site residue. Cysteines 282 and 412 form a disulfide. The active-site Nucleophile is glutamate 300.

Belongs to the glycosyl hydrolase 5 (cellulase A) family. Monomer.

Its subcellular location is the secreted. It is found in the cell wall. The enzyme catalyses Successive hydrolysis of beta-D-glucose units from the non-reducing ends of (1-&gt;3)-beta-D-glucans, releasing alpha-glucose.. Major glucan 1,3-beta-glucosidase required for cell wall integrity. Beta-glucanases participate in the metabolism of beta-glucan, the main structural component of the cell wall. Can also function biosynthetically as a transglycosylase. Functions to deliver glucan from the cell to the extracellular matrix. Involved in cell-substrate and cell-cell adhesion. This is Probable glucan 1,3-beta-glucosidase ARB_04467 from Arthroderma benhamiae (strain ATCC MYA-4681 / CBS 112371) (Trichophyton mentagrophytes).